Consider the following 252-residue polypeptide: MARMGGKKHLKALVAPKFWPILRKEYKWAVKPSPGPHPIERCFPLLIIVRDILGYAKTAREARKLISEGHFKVDGRVRKNYKYPVGLMDVIEIVDTGETYRVIPVPVKVLGLIEIDKEEAKYKLSRIENKTTVKGGHIQLNLHDGRNVLIKVSDPKNPVEDIYKTLGTLQISIPEQQILNYIPLDEGTLVIISGGRNVGRVGKVVSIHKGIRRHRSIVTIEDKHGNKFQTSLTYVFPIGKEEPLIKLPEGAW.

In terms of domain architecture, S4 RNA-binding spans 43–105 (FPLLIIVRDI…TGETYRVIPV (63 aa)).

This sequence belongs to the eukaryotic ribosomal protein eS4 family.

This is Small ribosomal subunit protein eS4 from Staphylothermus marinus (strain ATCC 43588 / DSM 3639 / JCM 9404 / F1).